A 152-amino-acid chain; its full sequence is Transcriptional repressor NrdR (152 aa).

A zinc finger lies at 3–34; the sequence is CCYCGHGESKVLETRSAEEGRVIRRRRECMEC. The 91-residue stretch at 49-139 folds into the ATP-cone domain; sequence LIVRKKGGSL…VYRQFTDVGR (91 aa).

The protein belongs to the NrdR family. It depends on Zn(2+) as a cofactor.

In terms of biological role, negatively regulates transcription of bacterial ribonucleotide reductase nrd genes and operons by binding to NrdR-boxes. This Heliobacterium modesticaldum (strain ATCC 51547 / Ice1) protein is Transcriptional repressor NrdR.